A 493-amino-acid polypeptide reads, in one-letter code: 2-amino-4-deoxychorismate synthase (493 aa).

The protein belongs to the anthranilate synthase component I family. It depends on Mg(2+) as a cofactor.

It catalyses the reaction (2S)-2-amino-4-deoxychorismate + L-glutamate = chorismate + L-glutamine. Converts chorismate to 2-amino-4-deoxychorismate (ADIC). Involved in the biosynthesis of the benzoxazolinate moiety of the enediyne antitumor antibiotic C-1027. The sequence is that of 2-amino-4-deoxychorismate synthase (sgcD) from Streptomyces globisporus.